Here is a 183-residue protein sequence, read N- to C-terminus: Calcium-binding protein M (183 aa).

Glycine 2 carries the N-myristoyl glycine lipid modification. 4 consecutive EF-hand domains span residues 25–60, 61–96, 97–132, and 142–177; these read EEVANIYGEFKKFDKDGNGSFDRKEFVLFFKSKLPN, YPEDNLNKLFDAFDSDKSNTIDFKELTVALSIIGKG, SAEDKLKVLFDIYDKDKSGILEKKEVDEMIALMKNV, and DIELFIVKLFEKIDKDKNNLISREEFLTEGARSPSL. Ca(2+) is bound by residues aspartate 74, aspartate 76, serine 78, threonine 80, glutamate 85, aspartate 110, aspartate 112, serine 114, glutamate 121, aspartate 155, aspartate 157, asparagine 159, and glutamate 166.

This sequence belongs to the recoverin family.

This is Calcium-binding protein M (cbpM) from Dictyostelium discoideum (Social amoeba).